Consider the following 99-residue polypeptide: U1-theraphotoxin-Lsp1c (99 aa).

An N-terminal signal peptide occupies residues 1–23 (MRKITIRALLLCSLLLVFHTSAA). Positions 24 to 50 (AELQAQEGHLMIPGDTDTALETVDDER) are excised as a propeptide. 4 disulfides stabilise this stretch: Cys-54–Cys-67, Cys-58–Cys-91, Cys-72–Cys-74, and Cys-85–Cys-96.

It belongs to the neurotoxin 12 (Hwtx-2) family. 04 (lasiotoxin) subfamily. In terms of tissue distribution, expressed by the venom gland.

It localises to the secreted. Toxin that causes irreversible contractile paralysis into adult Aedes aegypti resulting in 100% mortality after 24 hours. This Lasiodora sp. (strain IBSP 8539) (Brazilian salmon pink birdeater) protein is U1-theraphotoxin-Lsp1c.